Here is a 693-residue protein sequence, read N- to C-terminus: Glycine--tRNA ligase beta subunit (693 aa).

The protein belongs to the class-II aminoacyl-tRNA synthetase family. Tetramer of two alpha and two beta subunits.

It localises to the cytoplasm. The enzyme catalyses tRNA(Gly) + glycine + ATP = glycyl-tRNA(Gly) + AMP + diphosphate. The chain is Glycine--tRNA ligase beta subunit from Vibrio vulnificus (strain YJ016).